Consider the following 195-residue polypeptide: Holliday junction branch migration complex subunit RuvA (195 aa).

The tract at residues 1 to 62 (MIEFVKGPVA…EDQQTLYGFR (62 aa)) is domain I. The segment at 63-141 (SRRERELFNK…ELAPDYVPNE (79 aa)) is domain II. Residues 141 to 145 (EGLFA) form a flexible linker region. Residues 146-195 (QGASELDEACEALVALGYSEREIAKVRKALSGEILTTDAYIKRALQLLLK) are domain III.

The protein belongs to the RuvA family. In terms of assembly, homotetramer. Forms an RuvA(8)-RuvB(12)-Holliday junction (HJ) complex. HJ DNA is sandwiched between 2 RuvA tetramers; dsDNA enters through RuvA and exits via RuvB. An RuvB hexamer assembles on each DNA strand where it exits the tetramer. Each RuvB hexamer is contacted by two RuvA subunits (via domain III) on 2 adjacent RuvB subunits; this complex drives branch migration. In the full resolvosome a probable DNA-RuvA(4)-RuvB(12)-RuvC(2) complex forms which resolves the HJ.

The protein resides in the cytoplasm. Its function is as follows. The RuvA-RuvB-RuvC complex processes Holliday junction (HJ) DNA during genetic recombination and DNA repair, while the RuvA-RuvB complex plays an important role in the rescue of blocked DNA replication forks via replication fork reversal (RFR). RuvA specifically binds to HJ cruciform DNA, conferring on it an open structure. The RuvB hexamer acts as an ATP-dependent pump, pulling dsDNA into and through the RuvAB complex. HJ branch migration allows RuvC to scan DNA until it finds its consensus sequence, where it cleaves and resolves the cruciform DNA. The polypeptide is Holliday junction branch migration complex subunit RuvA (Exiguobacterium sp. (strain ATCC BAA-1283 / AT1b)).